We begin with the raw amino-acid sequence, 92 residues long: Acylphosphatase (92 aa).

In terms of domain architecture, Acylphosphatase-like spans arginine 5–histidine 92. Residues arginine 20 and asparagine 38 contribute to the active site.

The protein belongs to the acylphosphatase family.

It carries out the reaction an acyl phosphate + H2O = a carboxylate + phosphate + H(+). In Marinobacter nauticus (strain ATCC 700491 / DSM 11845 / VT8) (Marinobacter aquaeolei), this protein is Acylphosphatase (acyP).